A 334-amino-acid polypeptide reads, in one-letter code: N-acetyl-gamma-glutamyl-phosphate reductase (334 aa).

C154 is a catalytic residue.

It belongs to the NAGSA dehydrogenase family. Type 1 subfamily.

Its subcellular location is the cytoplasm. It catalyses the reaction N-acetyl-L-glutamate 5-semialdehyde + phosphate + NADP(+) = N-acetyl-L-glutamyl 5-phosphate + NADPH + H(+). Its pathway is amino-acid biosynthesis; L-arginine biosynthesis; N(2)-acetyl-L-ornithine from L-glutamate: step 3/4. Its function is as follows. Catalyzes the NADPH-dependent reduction of N-acetyl-5-glutamyl phosphate to yield N-acetyl-L-glutamate 5-semialdehyde. The protein is N-acetyl-gamma-glutamyl-phosphate reductase of Escherichia coli O157:H7.